A 207-amino-acid chain; its full sequence is Urease accessory protein UreG (207 aa).

12–19 (GPVGAGKT) lines the GTP pocket.

It belongs to the SIMIBI class G3E GTPase family. UreG subfamily. As to quaternary structure, homodimer. UreD, UreF and UreG form a complex that acts as a GTP-hydrolysis-dependent molecular chaperone, activating the urease apoprotein by helping to assemble the nickel containing metallocenter of UreC. The UreE protein probably delivers the nickel.

It is found in the cytoplasm. Functionally, facilitates the functional incorporation of the urease nickel metallocenter. This process requires GTP hydrolysis, probably effectuated by UreG. In Cereibacter sphaeroides (strain ATCC 17023 / DSM 158 / JCM 6121 / CCUG 31486 / LMG 2827 / NBRC 12203 / NCIMB 8253 / ATH 2.4.1.) (Rhodobacter sphaeroides), this protein is Urease accessory protein UreG.